The chain runs to 166 residues: Large ribosomal subunit protein uL10 (166 aa).

Belongs to the universal ribosomal protein uL10 family. In terms of assembly, part of the ribosomal stalk of the 50S ribosomal subunit. The N-terminus interacts with L11 and the large rRNA to form the base of the stalk. The C-terminus forms an elongated spine to which L12 dimers bind in a sequential fashion forming a multimeric L10(L12)X complex.

In terms of biological role, forms part of the ribosomal stalk, playing a central role in the interaction of the ribosome with GTP-bound translation factors. The chain is Large ribosomal subunit protein uL10 from Geobacillus sp. (strain WCH70).